The chain runs to 758 residues: Probable serine/threonine-protein kinase HAL5-like (758 aa).

Disordered regions lie at residues 1 to 170 (MGTV…SADD) and 189 to 252 (IDNA…HRGR). Residues 22 to 57 (RSISGSIKSLFKPSSVQNSTPTVSPHESSPPLGNSD) are compositionally biased toward polar residues. The span at 58 to 69 (NLKKLVDTKRAE) shows a compositional bias: basic and acidic residues. Positions 129-153 (SSPRQSSSTNDRSSITSATSSVTSA) are enriched in low complexity. The span at 216-226 (DKNFESSEYEI) shows a compositional bias: basic and acidic residues. Over residues 227–247 (RSNSLSRIHSTPQNESPTVNN) the composition is skewed to polar residues. Positions 442-744 (KSMGVVLGHG…IDQLLQSPWM (303 aa)) constitute a Protein kinase domain. Residues 448-456 (LGHGAYGVV) and lysine 485 contribute to the ATP site. The active-site Proton acceptor is aspartate 595.

The protein belongs to the protein kinase superfamily. CAMK Ser/Thr protein kinase family. NPR/HAL subfamily. HAL5 sub-subfamily.

It carries out the reaction L-seryl-[protein] + ATP = O-phospho-L-seryl-[protein] + ADP + H(+). The enzyme catalyses L-threonyl-[protein] + ATP = O-phospho-L-threonyl-[protein] + ADP + H(+). The sequence is that of Probable serine/threonine-protein kinase HAL5-like from Vanderwaltozyma polyspora (strain ATCC 22028 / DSM 70294 / BCRC 21397 / CBS 2163 / NBRC 10782 / NRRL Y-8283 / UCD 57-17) (Kluyveromyces polysporus).